The following is a 143-amino-acid chain: MAPKKKVSALIKLQIQAGKANPAPPLGPALGSHGVNIMDFCKAYNAQTQDKMGQVIPVEITVYEDRSFTFVLKTPPAAALLKKAAGVEKGTENPLTHKVGSVTKAQVREIAEIKMEDLSARDIEAGMKIIEGTARSMGITVTD.

This sequence belongs to the universal ribosomal protein uL11 family. Part of the ribosomal stalk of the 50S ribosomal subunit. Interacts with L10 and the large rRNA to form the base of the stalk. L10 forms an elongated spine to which L12 dimers bind in a sequential fashion forming a multimeric L10(L12)X complex. In terms of processing, one or more lysine residues are methylated.

Functionally, forms part of the ribosomal stalk which helps the ribosome interact with GTP-bound translation factors. This chain is Large ribosomal subunit protein uL11, found in Bifidobacterium longum (strain DJO10A).